Here is a 201-residue protein sequence, read N- to C-terminus: Small ribosomal subunit protein uS4c (201 aa).

The tract at residues Gly-20–Gly-39 is disordered. The S4 RNA-binding domain occupies Met-89 to Asn-150.

Belongs to the universal ribosomal protein uS4 family. Part of the 30S ribosomal subunit. Contacts protein S5. The interaction surface between S4 and S5 is involved in control of translational fidelity.

It localises to the plastid. The protein resides in the chloroplast. In terms of biological role, one of the primary rRNA binding proteins, it binds directly to 16S rRNA where it nucleates assembly of the body of the 30S subunit. With S5 and S12 plays an important role in translational accuracy. The chain is Small ribosomal subunit protein uS4c (rps4) from Oryza nivara (Indian wild rice).